The chain runs to 152 residues: Prostaglandin E synthase (152 aa).

The Lumenal portion of the chain corresponds to 1-12 (MPAHSLAMSSPA). The helical transmembrane segment at 13–41 (LPAFLLCSTLLVIKMYVVAIITGQVRLRK) threads the bilayer. Arginine 38 contacts glutathione. Residues 42-60 (KAFANPEDALRHGGPQYCR) are Cytoplasmic-facing. A helical transmembrane segment spans residues 61–90 (SDPDVERCLRAHRNDMETIYPFLFLGFVYS). 73–77 (RNDME) serves as a coordination point for glutathione. The Lumenal segment spans residues 91–95 (FLGPN). The chain crosses the membrane as a helical span at residues 96–119 (PFVAWMHFLVFLLGRVVHTVAYLG). Residues histidine 113 and tyrosine 117 each contribute to the glutathione site. The Cytoplasmic portion of the chain corresponds to 120-123 (KLRA). Residues 124–152 (PIRSVTYTLAQLPCASMALQILWEAARHL) form a helical membrane-spanning segment. A glutathione-binding site is contributed by 126 to 130 (RSVTY).

This sequence belongs to the MAPEG family. Homotrimer. Glutathione is required as a cofactor.

The protein localises to the membrane. Its subcellular location is the cytoplasm. The protein resides in the perinuclear region. The enzyme catalyses prostaglandin H2 = prostaglandin E2. It carries out the reaction 2-glyceryl-prostaglandin H2 = 2-glyceryl-prostaglandin E2. It catalyses the reaction prostaglandin G2 = (15S)-15-hydroperoxy-prostaglandin E2. The catalysed reaction is 1-chloro-2,4-dinitrobenzene + glutathione = 2,4-dinitrophenyl-S-glutathione + chloride + H(+). The enzyme catalyses (5S)-hydroperoxy-(6E,8Z,11Z,14Z)-eicosatetraenoate + 2 glutathione = (5S)-hydroxy-(6E,8Z,11Z,14Z)-eicosatetraenoate + glutathione disulfide + H2O. It functions in the pathway lipid metabolism; prostaglandin biosynthesis. Its function is as follows. Terminal enzyme of the cyclooxygenase (COX)-2-mediated prostaglandin E2 (PGE2) biosynthetic pathway. Catalyzes the glutathione-dependent oxidoreduction of prostaglandin endoperoxide H2 (PGH2) to prostaglandin E2 (PGE2) in response to inflammatory stimuli. Plays a key role in inflammation response, fever and pain. Also catalyzes the oxidoreduction of endocannabinoids into prostaglandin glycerol esters and PGG2 into 15-hydroperoxy-PGE2. In addition, displays low glutathione transferase and glutathione-dependent peroxidase activities, toward 1-chloro-2,4-dinitrobenzene and 5-hydroperoxyicosatetraenoic acid (5-HPETE), respectively. The polypeptide is Prostaglandin E synthase (PTGES) (Macaca fascicularis (Crab-eating macaque)).